Consider the following 162-residue polypeptide: MTLTVDIEIEDEAWTKAEPEVEALVWRAAQAVLDAHEDIEGHGIVILLADDDSVQTLNRDFRQKDYATNVLSFPSVTSPGANPEGQIGDIALAFGVCQREAAEQGKSLAHHLQHLVAHGVLHLLGYDHQDDADAEAMEAFEREILAGLDIPDPYAEPASAEG.

His-118, His-122, and His-128 together coordinate Zn(2+).

Belongs to the endoribonuclease YbeY family. The cofactor is Zn(2+).

The protein resides in the cytoplasm. Single strand-specific metallo-endoribonuclease involved in late-stage 70S ribosome quality control and in maturation of the 3' terminus of the 16S rRNA. The sequence is that of Endoribonuclease YbeY from Caulobacter sp. (strain K31).